Here is a 336-residue protein sequence, read N- to C-terminus: Fructose-1,6-bisphosphatase class 1 (336 aa).

4 residues coordinate Mg(2+): E90, D112, L114, and D115. Substrate-binding positions include 115–118 (DGSS), N207, and K273. E279 serves as a coordination point for Mg(2+).

Belongs to the FBPase class 1 family. In terms of assembly, homotetramer. Mg(2+) is required as a cofactor.

The protein localises to the cytoplasm. The enzyme catalyses beta-D-fructose 1,6-bisphosphate + H2O = beta-D-fructose 6-phosphate + phosphate. It functions in the pathway carbohydrate biosynthesis; gluconeogenesis. This chain is Fructose-1,6-bisphosphatase class 1, found in Xanthomonas euvesicatoria pv. vesicatoria (strain 85-10) (Xanthomonas campestris pv. vesicatoria).